A 309-amino-acid polypeptide reads, in one-letter code: Homoserine O-succinyltransferase (309 aa).

Cysteine 142 (acyl-thioester intermediate) is an active-site residue. Substrate contacts are provided by lysine 163 and serine 192. Histidine 235 serves as the catalytic Proton acceptor. Glutamate 237 is an active-site residue. Arginine 249 is a substrate binding site.

The protein belongs to the MetA family.

It localises to the cytoplasm. The enzyme catalyses L-homoserine + succinyl-CoA = O-succinyl-L-homoserine + CoA. It participates in amino-acid biosynthesis; L-methionine biosynthesis via de novo pathway; O-succinyl-L-homoserine from L-homoserine: step 1/1. Transfers a succinyl group from succinyl-CoA to L-homoserine, forming succinyl-L-homoserine. The sequence is that of Homoserine O-succinyltransferase from Serratia proteamaculans (strain 568).